The chain runs to 363 residues: Peptide chain release factor 1 (363 aa).

The residue at position 236 (Gln-236) is an N5-methylglutamine. The interval 286–305 is disordered; sequence KKEMERSTMRKSQIGSGDRS.

It belongs to the prokaryotic/mitochondrial release factor family. Post-translationally, methylated by PrmC. Methylation increases the termination efficiency of RF1.

It localises to the cytoplasm. Its function is as follows. Peptide chain release factor 1 directs the termination of translation in response to the peptide chain termination codons UAG and UAA. This is Peptide chain release factor 1 from Wolbachia pipientis subsp. Culex pipiens (strain wPip).